The sequence spans 250 residues: uncharacterized protein (250 aa).

A divalent metal cation is bound by residues Glu-97, Glu-99, and Asp-128.

It belongs to the FAH family.

This is an uncharacterized protein from Archaeoglobus fulgidus (strain ATCC 49558 / DSM 4304 / JCM 9628 / NBRC 100126 / VC-16).